The following is a 245-amino-acid chain: Adenosylcobinamide-GDP ribazoletransferase (245 aa).

Helical transmembrane passes span 31–51 (FGRAVLCYPLVGVLIGVVLYA), 61–81 (PLLQAALLLSLWVALSGALHL), 113–133 (VAVVVLVLVLLLKFSALAALL), 138–158 (AGLLPLAPWLARSSLPLLFLT), and 192–212 (LAFGLAGLLALLVTLMLFAWL).

Belongs to the CobS family. Mg(2+) serves as cofactor.

The protein resides in the cell inner membrane. It catalyses the reaction alpha-ribazole + adenosylcob(III)inamide-GDP = adenosylcob(III)alamin + GMP + H(+). The enzyme catalyses alpha-ribazole 5'-phosphate + adenosylcob(III)inamide-GDP = adenosylcob(III)alamin 5'-phosphate + GMP + H(+). The protein operates within cofactor biosynthesis; adenosylcobalamin biosynthesis; adenosylcobalamin from cob(II)yrinate a,c-diamide: step 7/7. In terms of biological role, joins adenosylcobinamide-GDP and alpha-ribazole to generate adenosylcobalamin (Ado-cobalamin). Also synthesizes adenosylcobalamin 5'-phosphate from adenosylcobinamide-GDP and alpha-ribazole 5'-phosphate. In Pseudomonas aeruginosa (strain UCBPP-PA14), this protein is Adenosylcobinamide-GDP ribazoletransferase.